Reading from the N-terminus, the 109-residue chain is Small ribosomal subunit protein uS17 (109 aa).

It belongs to the universal ribosomal protein uS17 family. In terms of assembly, part of the 30S ribosomal subunit.

One of the primary rRNA binding proteins, it binds specifically to the 5'-end of 16S ribosomal RNA. The chain is Small ribosomal subunit protein uS17 from Methanococcoides burtonii (strain DSM 6242 / NBRC 107633 / OCM 468 / ACE-M).